An 898-amino-acid polypeptide reads, in one-letter code: Vacuolar membrane protease (898 aa).

The Cytoplasmic portion of the chain corresponds to 1–14; it reads MGIVDYLVAAVSFR. The helical transmembrane segment at 15 to 35 threads the bilayer; that stretch reads TLPTTFVAVLVYLAIFISVLI. The Vacuolar segment spans residues 36–342; it reads TDELPATPKD…LFGQALIVFP (307 aa). 3 N-linked (GlcNAc...) asparagine glycosylation sites follow: Asn50, Asn103, and Asn110. Positions 139 and 151 each coordinate Zn(2+). Residue Glu183 is the Proton acceptor of the active site. Glu184 contacts Zn(2+). Asn200 is a glycosylation site (N-linked (GlcNAc...) asparagine). Glu209 and His284 together coordinate Zn(2+). A helical transmembrane segment spans residues 343-365; the sequence is LSAMITFNIVFLVVGPIMLALLV. Topologically, residues 366 to 411 are cytoplasmic; it reads TFDIVARHRRQEMIGGGYEEQGFFARAWTSFKSFRWVGGFWKHAKF. The helical transmembrane segment at 412–432 threads the bilayer; it reads WVALAVTVGLQVLLCVGYLYI. A topological domain (vacuolar) is located at residue Asn433. The chain crosses the membrane as a helical span at residues 434-454; sequence PLIAYSSSHIVLLSFLSLAYL. The Cytoplasmic portion of the chain corresponds to 455-479; it reads STYLVHNIPSPTDTYGSHLPEQQKQ. A helical transmembrane segment spans residues 480-500; it reads AALFQLYFFTWILLLAATVVG. Residues 501 to 509 are Vacuolar-facing; the sequence is AKLSVGSFY. The chain crosses the membrane as a helical span at residues 510-530; it reads ILSLWNAVLFAACAIGSIAGL. The Cytoplasmic portion of the chain corresponds to 531-593; the sequence is LSSHTVEGDA…PGGKEGEEVS (63 aa). Residues 594-614 traverse the membrane as a helical segment; sequence GAIGWWFVQFVLSVPAVVILV. Residues 615 to 635 lie on the Vacuolar side of the membrane; sequence SQLALLMLAATEQTLADGSPA. The helical transmembrane segment at 636-656 threads the bilayer; sequence VTVYGGASLMSVLAILPLAPF. Over 657–664 the chain is Cytoplasmic; the sequence is ACKLHRRV. A helical membrane pass occupies residues 665–685; that stretch reads AYVALVVLIASTAYAWLVFPF. At 686–898 the chain is on the vacuolar side; it reads SERAPLKVFF…LVEGYKAFAV (213 aa). Asn704, Asn733, and Asn764 each carry an N-linked (GlcNAc...) asparagine glycan.

The protein belongs to the peptidase M28 family. Zn(2+) serves as cofactor.

It is found in the vacuole membrane. May be involved in vacuolar sorting and osmoregulation. In Schizophyllum commune (strain H4-8 / FGSC 9210) (Split gill fungus), this protein is Vacuolar membrane protease.